A 467-amino-acid polypeptide reads, in one-letter code: NALCN channel auxiliary factor 1 (467 aa).

The chain crosses the membrane as a helical span at residues 40–60 (LSLASLLFFTVLLSDHLWFCA). Positions 121-161 (MGESSPAAQAHRLLSASSSPTLPPSPGGGGGSKGNRGKNNR) are disordered. Residues Asn160, Asn226, and Asn254 are each glycosylated (N-linked (GlcNAc...) asparagine). 7 cysteine pairs are disulfide-bonded: Cys200-Cys270, Cys235-Cys322, Cys255-Cys270, Cys313-Cys350, Cys333-Cys386, Cys339-Cys385, and Cys343-Cys370. The span at 390–408 (SEEQTAPRPKGTVDRRDSC) shows a compositional bias: basic and acidic residues. The disordered stretch occupies residues 390-409 (SEEQTAPRPKGTVDRRDSCP). The helical transmembrane segment at 426–446 (LKLCVLVLILLHTVLTASAAQ) threads the bilayer. N-linked (GlcNAc...) asparagine glycosylation is present at Asn462.

Belongs to the NALF family. Component of the NALCN channel complex. NALCN complex consists of NALCN and auxiliary subunits, UNC79, UNC80 and NACL1. These auxiliary subunits are essential for the NALCN channel function.

Its subcellular location is the cell membrane. In terms of biological role, auxillary component of the NALCN sodium channel complex, a channel that regulates the resting membrane potential and controls neuronal excitability. This chain is NALCN channel auxiliary factor 1, found in Mus musculus (Mouse).